Here is a 1206-residue protein sequence, read N- to C-terminus: STE20-like serine/threonine-protein kinase (1206 aa).

Ser-14 carries the phosphoserine modification. Positions 34–292 (WEIIGELGDG…TSQLLQHPFV (259 aa)) constitute a Protein kinase domain. ATP is bound by residues 40-48 (LGDGAFGKV) and Lys-63. Residue Asp-155 is the Proton acceptor of the active site. Phosphothreonine is present on Thr-183. Position 189 is a phosphoserine (Ser-189). The interval 308 to 352 (KAEVTEEVEDGKEEDDDDETESALPIPANKRASSDLSIASSEEDK) is disordered. The span at 312 to 328 (TEEVEDGKEEDDDDETE) shows a compositional bias: acidic residues. 7 positions are modified to phosphoserine: Ser-340, Ser-341, Ser-344, Ser-347, Ser-348, Ser-354, and Ser-372. The segment at 364–440 (SERTEHNTSG…ESQPDTEDQQ (77 aa)) is disordered. Basic and acidic residues-rich tracts occupy residues 381-395 (LSEK…KTVD) and 420-429 (ENGREKKRPQ). Positions 468–492 (EEDRNEENQEIIENKLTQSEEIKDI) form a coiled coil. 2 disordered regions span residues 515 to 761 (DNEV…SSSD) and 773 to 792 (TKDS…KTLK). Positions 520–536 (FTKEETQEKLGKDDKTH) are enriched in basic and acidic residues. Ser-545 and Ser-563 each carry phosphoserine. Residues 556–565 (TQKSAEQSQD) show a composition bias toward polar residues. Basic and acidic residues predominate over residues 584–609 (KATEGPEAHGAEEEPRSGERVEDKQL). The span at 634–643 (EEPETDEVDQ) shows a compositional bias: acidic residues. Phosphoserine is present on residues Ser-645, Ser-649, and Ser-668. Residues 691–702 (AEPQAPAASQAS) show a composition bias toward low complexity. The span at 747–757 (TDSGTGSTVEN) shows a compositional bias: polar residues. 2 positions are modified to phosphoserine: Ser-776 and Ser-778. Position 813 is a phosphothreonine (Thr-813). Ser-817 bears the Phosphoserine mark. A coiled-coil region spans residues 825–1037 (LRRQELRELR…LKNRQTQERA (213 aa)). Positions 874–909 (DQEIENLEKQQKQTIERLEQEHTNRLRDEAKRIKGE) constitute a UVR domain. Thr-1065 is modified (phosphothreonine). Positions 1077 to 1151 (AAQEEKRQKN…ELKEWREKLR (75 aa)) form a coiled coil. Basic and acidic residues predominate over residues 1079 to 1099 (QEEKRQKNERMAQHQKHESQM). Disordered regions lie at residues 1079–1100 (QEEK…SQMR) and 1181–1206 (LNPS…AWAG). The segment covering 1181–1200 (LNPSAQSRGCLQTSHPSSTR) has biased composition (polar residues).

Belongs to the protein kinase superfamily. STE Ser/Thr protein kinase family. STE20 subfamily. In terms of processing, proteolytically cleaved by caspase-3. Autophosphorylated.

It localises to the cytoplasm. The enzyme catalyses L-seryl-[protein] + ATP = O-phospho-L-seryl-[protein] + ADP + H(+). The catalysed reaction is L-threonyl-[protein] + ATP = O-phospho-L-threonyl-[protein] + ADP + H(+). In terms of biological role, mediates apoptosis and actin stress fiber dissolution. This chain is STE20-like serine/threonine-protein kinase (Slk), found in Rattus norvegicus (Rat).